Reading from the N-terminus, the 458-residue chain is MPIATTNPATGETVKTFTAASNDEVDAAIARAYARFQDYRRNTTFAQRAEWAHATADLIEAEADQTAALMTLEMGKTIASAKAEVLKSAKGFRYYADNAAALLADEPADAGKVGASQAYTRYQPLGVVLAVMPWNFPLWQAGRFAAPALMAGNVGLLKHASNVPQSALYLADVIARAGFPDGCFQTLLVSASAVEGILRDPRVAAATLTGSEPAGQSVGAIAGDEIKPTVLELGGSDPFIVMPSADLDKAVSTAVTGRVQNNGQSCIAAKRFIAHADIYDAFVDKFVEQMSALTVGDPTDPQTQVGPLATEQSRDEIAQQVDDAAAAGAVIRCGGKPLAGPGWYYPPTVITDITKDMNLYTEEVFGPVASVYRAADIDEAIEIANATTFGLGSNAWTQDEAEQRRFINDIEAGQVFINGMTVSYPELPFGGIKRSGYGRELAGHGIREFCNIKTVWVG.

Residues tryptophan 134–asparagine 135, lysine 158–serine 161, and glycine 210–serine 211 contribute to the NADP(+) site. Residue glutamate 232 is the Proton acceptor of the active site. NADP(+) is bound at residue leucine 233. Residue cysteine 266 is the Nucleophile of the active site. An NADP(+)-binding site is contributed by glutamate 363.

This sequence belongs to the aldehyde dehydrogenase family.

It carries out the reaction succinate semialdehyde + NADP(+) + H2O = succinate + NADPH + 2 H(+). Its function is as follows. Catalyzes the NADP(+)-dependent oxidation of succinate semialdehyde to succinate. It is believed to be the main source of succinate semialdehyde dehydrogenase activity in Mycobacterium. The polypeptide is Succinate-semialdehyde dehydrogenase [NADP(+)] 1 (gabD1) (Mycobacterium ulcerans (strain Agy99)).